Reading from the N-terminus, the 90-residue chain is Small ribosomal subunit protein bS16 (90 aa).

The protein belongs to the bacterial ribosomal protein bS16 family.

This is Small ribosomal subunit protein bS16 from Brevibacillus brevis (strain 47 / JCM 6285 / NBRC 100599).